Consider the following 638-residue polypeptide: 1-deoxy-D-xylulose-5-phosphate synthase (638 aa).

Residues His-75 and 116 to 118 (AHS) contribute to the thiamine diphosphate site. Asp-147 provides a ligand contact to Mg(2+). Residues 148-149 (GA), Asn-177, Tyr-288, and Glu-370 each bind thiamine diphosphate. A Mg(2+)-binding site is contributed by Asn-177.

This sequence belongs to the transketolase family. DXPS subfamily. In terms of assembly, homodimer. It depends on Mg(2+) as a cofactor. Thiamine diphosphate is required as a cofactor.

It catalyses the reaction D-glyceraldehyde 3-phosphate + pyruvate + H(+) = 1-deoxy-D-xylulose 5-phosphate + CO2. It functions in the pathway metabolic intermediate biosynthesis; 1-deoxy-D-xylulose 5-phosphate biosynthesis; 1-deoxy-D-xylulose 5-phosphate from D-glyceraldehyde 3-phosphate and pyruvate: step 1/1. Functionally, catalyzes the acyloin condensation reaction between C atoms 2 and 3 of pyruvate and glyceraldehyde 3-phosphate to yield 1-deoxy-D-xylulose-5-phosphate (DXP). The protein is 1-deoxy-D-xylulose-5-phosphate synthase of Cupriavidus taiwanensis (strain DSM 17343 / BCRC 17206 / CCUG 44338 / CIP 107171 / LMG 19424 / R1) (Ralstonia taiwanensis (strain LMG 19424)).